A 207-amino-acid polypeptide reads, in one-letter code: High frequency lysogenization protein HflD homolog (207 aa).

Belongs to the HflD family.

Its subcellular location is the cytoplasm. The protein localises to the cell inner membrane. This chain is High frequency lysogenization protein HflD homolog, found in Cellvibrio japonicus (strain Ueda107) (Pseudomonas fluorescens subsp. cellulosa).